The primary structure comprises 310 residues: GPN-loop GTPase 2 (310 aa).

Alanine 2 bears the N-acetylalanine mark. Glycine 19–threonine 24 serves as a coordination point for GTP. Positions glycine 76–asparagine 78 match the Gly-Pro-Asn (GPN)-loop; involved in dimer interface motif. Serine 178 to aspartate 181 contributes to the GTP binding site.

The protein belongs to the GPN-loop GTPase family. As to quaternary structure, heterodimers with GPN1 or GPN3. Binds to RNA polymerase II (RNAPII).

In terms of biological role, small GTPase required for proper localization of RNA polymerase II and III (RNAPII and RNAPIII). May act at an RNAP assembly step prior to nuclear import. This is GPN-loop GTPase 2 from Homo sapiens (Human).